The following is a 281-amino-acid chain: Probable protein phosphatase 2C 9 (281 aa).

A PPM-type phosphatase domain is found at 33 to 280 (KYGFSLVKGK…DDISCVVVRF (248 aa)). Mn(2+) is bound by residues D70, G71, D232, and D271.

Belongs to the PP2C family. In terms of assembly, interacts with phytochromes (via N-terminus). Mg(2+) serves as cofactor. The cofactor is Mn(2+).

The protein localises to the nucleus. It carries out the reaction O-phospho-L-seryl-[protein] + H2O = L-seryl-[protein] + phosphate. The catalysed reaction is O-phospho-L-threonyl-[protein] + H2O = L-threonyl-[protein] + phosphate. Its function is as follows. Involved in the regulation of phytochrome signaling. May regulate phytochrome-interacting factor 3 (PIF3) through the dephosphorylation of phytochrome. The sequence is that of Probable protein phosphatase 2C 9 from Arabidopsis thaliana (Mouse-ear cress).